The sequence spans 80 residues: MAFLKKSLFLVLFLGLVSLSICEEKRENEDEEEQEDDEQSEEKRGMWSKIKNAGKAAAKASKKAAGKAALGAVSEALGEQ.

The N-terminal stretch at 1–22 (MAFLKKSLFLVLFLGLVSLSIC) is a signal peptide. Residues 23-42 (EEKRENEDEEEQEDDEQSEE) constitute a propeptide that is removed on maturation. Positions 24–48 (EKRENEDEEEQEDDEQSEEKRGMWS) are disordered. Residues 29–40 (EDEEEQEDDEQS) show a composition bias toward acidic residues. Leucine 77 is modified (leucine amide). Positions 79–80 (EQ) are excised as a propeptide.

Belongs to the frog skin active peptide (FSAP) family. Dermaseptin subfamily. In terms of tissue distribution, expressed by the skin glands.

It localises to the secreted. In terms of biological role, possesses a potent antimicrobial activity against Gram-positive and Gram-negative bacteria. Probably acts by disturbing membrane functions with its amphipathic structure. The chain is Dermaseptin-DA3 from Agalychnis dacnicolor (Giant Mexican leaf frog).